We begin with the raw amino-acid sequence, 1431 residues long: Trophinin (1431 aa).

Disordered stretches follow at residues 1-24 (MDRR…PGSL), 341-365 (SRAR…QGAQ), and 401-433 (PTTR…PWGR). Basic residues predominate over residues 405-415 (TRGKRNRKSKH). Residues 444–642 (LQERANKLVK…KDWAVQYREA (199 aa)) enclose the MAGE domain. Repeat copies occupy residues 751 to 760 (FSGGPGITFG) and 769 to 778 (FSNTASISFG). The tract at residues 751-1430 (FSGGPGITFG…ASLGACGFSY (680 aa)) is 62 X 10 AA approximate tandem repeats. The stretch at 779 to 786 (GTLSTSSS) is one 3; approximate repeat. A run of 2 repeats spans residues 787-796 (FSSAASISFG) and 805-814 (FSSEASISFG). The 6; approximate repeat unit spans residues 823-833 (FSGGVSSSFSG). Copy 7 of the repeat occupies 841–850 (FSGGASSGFG). An 8; approximate repeat occupies 859–870 (FSGVLSTSTSFG). Residues 879 to 890 (FSSALSTSTGFG) form a 9; approximate repeat. Tandem repeats lie at residues 901 to 910 (GSPSSSGSFG), 911 to 920 (GTLSTSICFG), 921 to 930 (GSPCTSTGFG), 931 to 940 (GTLSTSVSFG), and 941 to 950 (GSSSTSANFG). A 15; approximate repeat occupies 951-960 (GTLSTSICFD). Repeat copies occupy residues 961-970 (GSPSTGAGFG), 971-980 (GALNTSASFG), 981-990 (SVLNTSTGFG), 991-1000 (GAMSTSADFG), 1001-1010 (GTLSTSVCFG), and 1011-1020 (GSPGTSVSFG). A 22; approximate repeat occupies 1021 to 1030 (SALNTNAGYG). 4 tandem repeats follow at residues 1031-1040 (GAVSTNTDFG), 1041-1050 (GTLSTSVCFG), 1051-1060 (GSPSTSAGFG), and 1061-1070 (GALNTNASFG). A 27; approximate repeat occupies 1071-1080 (CAVSTSASFS). The stretch at 1081-1090 (GAVSTSACFS) is one 28; approximate repeat. Repeat copies occupy residues 1091-1100 (GAPITNPGFG), 1101-1110 (GAFSTSAGFG), 1111-1120 (GALSTAADFG), 1121-1130 (GTPSNSIGFG), 1131-1140 (AAPSTSVSFG), 1141-1150 (GAHGTSLCFG), 1151-1160 (GAPSTSLCFG), and 1161-1170 (SASNTNLCFG). A 37; approximate repeat occupies 1171–1180 (GPPSTSACFS). The stretch at 1181-1190 (GATSPSFCDG) is one 38; approximate repeat. 3 tandem repeats follow at residues 1191 to 1200 (PSTSTGFSFG), 1201 to 1210 (NGLSTNAGFG), and 1211 to 1220 (GGLNTSAGFG). Residues 1221–1230 (GGLGTSAGFS) form a 42; approximate repeat. One copy of the 43; approximate repeat lies at 1231–1240 (GGLSTSSGFD). A run of 2 repeats spans residues 1241–1250 (GGLGTSAGFG) and 1251–1260 (GGPGTSTGFG). The 46; approximate repeat unit spans residues 1261 to 1270 (GGLGTSAGFS). Tandem repeats lie at residues 1271 to 1280 (GGLGTSAGFG), 1281 to 1290 (GGLVTSDGFG), and 1291 to 1300 (GGLGTNASFG). Residues 1301–1310 (STLGTSAGFS) form a 50; approximate repeat. Repeat unit 51 spans residues 1311-1320 (GGLSTSDGFG). The stretch at 1321 to 1330 (SRPNASFDRG) is one 52; approximate repeat. Residues 1331-1340 (LSTIIGFGSG) form a 53; approximate repeat. A 54; approximate repeat occupies 1341–1350 (SNTSTGFTGE). Over residues 1342 to 1363 (NTSTGFTGEPSTSTGFSSGPSS) the composition is skewed to low complexity. Residues 1342–1365 (NTSTGFTGEPSTSTGFSSGPSSIV) are disordered. One copy of the 55; approximate repeat lies at 1351–1360 (PSTSTGFSSG). A 56; approximate repeat occupies 1361–1370 (PSSIVGFSGG). The 57; approximate repeat unit spans residues 1371–1380 (PSTGVGFCSG). Residues 1381–1390 (PSTSGFSGGP) form a 58; approximate repeat. Residues 1391-1400 (STGAGFGGGP) form a 59; approximate repeat. A 60; approximate repeat occupies 1401-1410 (NTGAGFGGGP). The 61; approximate repeat unit spans residues 1411-1420 (STSAGFGSGA). The stretch at 1421–1430 (ASLGACGFSY) is one 62; approximate repeat.

As to quaternary structure, directly binds bystin, and indirectly tastin. As to expression, strong expression at implantation sites. Found in the placenta from the sixth week of pregnancy. Was localized in the cytoplasm of the syncytiotrophoblast in the chorionic villi and in endometrial decidual cells at the uteroplacental interface. After week 10, the level decreased and then disappeared from placental villi. Also found in macrophages.

Functionally, could be involved with bystin and tastin in a cell adhesion molecule complex that mediates an initial attachment of the blastocyst to uterine epithelial cells at the time of the embryo implantation. Directly responsible for homophilic cell adhesion. The protein is Trophinin (TRO) of Homo sapiens (Human).